A 78-amino-acid polypeptide reads, in one-letter code: Translational regulator CsrA (78 aa).

It belongs to the CsrA/RsmA family. In terms of assembly, homodimer; the beta-strands of each monomer intercalate to form a hydrophobic core, while the alpha-helices form wings that extend away from the core.

The protein resides in the cytoplasm. In terms of biological role, a translational regulator that binds mRNA to regulate translation initiation and/or mRNA stability. Usually binds in the 5'-UTR at or near the Shine-Dalgarno sequence preventing ribosome-binding, thus repressing translation. Its main target seems to be the major flagellin gene, while its function is anatagonized by FliW. The chain is Translational regulator CsrA from Caldicellulosiruptor bescii (strain ATCC BAA-1888 / DSM 6725 / KCTC 15123 / Z-1320) (Anaerocellum thermophilum).